The primary structure comprises 1391 residues: DNA-directed RNA polymerase subunit beta (1391 aa).

The protein belongs to the RNA polymerase beta chain family. As to quaternary structure, the RNAP catalytic core consists of 2 alpha, 1 beta, 1 beta' and 1 omega subunit. When a sigma factor is associated with the core the holoenzyme is formed, which can initiate transcription.

The catalysed reaction is RNA(n) + a ribonucleoside 5'-triphosphate = RNA(n+1) + diphosphate. In terms of biological role, DNA-dependent RNA polymerase catalyzes the transcription of DNA into RNA using the four ribonucleoside triphosphates as substrates. This chain is DNA-directed RNA polymerase subunit beta, found in Mycoplasma pneumoniae (strain ATCC 29342 / M129 / Subtype 1) (Mycoplasmoides pneumoniae).